Consider the following 198-residue polypeptide: Proteasome subunit beta type-4 (198 aa).

Residue Met-1 is modified to N-acetylmethionine. Ser-76 is subject to Phosphoserine.

Belongs to the peptidase T1B family. The 26S proteasome consists of a 20S proteasome core and two 19S regulatory subunits. The 20S proteasome core is composed of 28 subunits that are arranged in four stacked rings, resulting in a barrel-shaped structure. The two end rings are each formed by seven alpha subunits, and the two central rings are each formed by seven beta subunits. The catalytic chamber with the active sites is on the inside of the barrel.

The protein resides in the cytoplasm. The protein localises to the nucleus. Functionally, non-catalytic component of the proteasome which degrades poly-ubiquitinated proteins in the cytoplasm and in the nucleus. It is essential for the regulated turnover of proteins and for the removal of misfolded proteins. The proteasome is a multicatalytic proteinase complex that is characterized by its ability to cleave peptides with Arg, Phe, Tyr, Leu, and Glu adjacent to the leaving group at neutral or slightly basic pH. It has an ATP-dependent proteolytic activity. This subunit has a chymotrypsin-like activity. The protein is Proteasome subunit beta type-4 (PRE1) of Saccharomyces cerevisiae (strain ATCC 204508 / S288c) (Baker's yeast).